The chain runs to 239 residues: Ribosomal RNA small subunit methyltransferase G (239 aa).

S-adenosyl-L-methionine is bound by residues G79, F84, 130 to 131, and R149; that span reads AE. Positions 218–239 are disordered; sequence KKTKTPKKYPRQAGTPSKKPIS.

Belongs to the methyltransferase superfamily. RNA methyltransferase RsmG family.

It is found in the cytoplasm. Its function is as follows. Specifically methylates the N7 position of a guanine in 16S rRNA. This is Ribosomal RNA small subunit methyltransferase G from Leuconostoc mesenteroides subsp. mesenteroides (strain ATCC 8293 / DSM 20343 / BCRC 11652 / CCM 1803 / JCM 6124 / NCDO 523 / NBRC 100496 / NCIMB 8023 / NCTC 12954 / NRRL B-1118 / 37Y).